The chain runs to 497 residues: Di-/tripeptide transporter (497 aa).

Residues 1-36 (MQNLNKTEKTFFGQPRGLLTLFQTEFWERFSYYGMR) are Cytoplasmic-facing. A helical transmembrane segment spans residues 37-55 (AILVYYLYALTTADNAGLG). Residues 56 to 64 (LPKAQAMAI) are Extracellular-facing. The helical transmembrane segment at 65–83 (VSIYGALVYLSTIVGGWVA) threads the bilayer. At 84–92 (DRLLGASRT) the chain is on the cytoplasmic side. A helical transmembrane segment spans residues 93-111 (IFLGGILITLGHVALATPF). Over 112-115 (GLSS) the chain is Extracellular. A helical transmembrane segment spans residues 116–134 (LFVALFLIILGTGMLKPNI). Residues 135–154 (SNMVGHLYSKDDSRRDTGFN) lie on the Cytoplasmic side of the membrane. Residues 155–173 (IFVVGINMGSLIAPLIVGT) form a helical membrane-spanning segment. At 174-181 (VGQGVNYH) the chain is on the extracellular side. A helical membrane pass occupies residues 182-200 (LGFSLAAIGMIFALFAYWY). The Cytoplasmic portion of the chain corresponds to 201–224 (GRLRHFPEIGREPSNPMDAKAKRN). Residues 225–243 (FIITLTIVLIVALIGFFLI) traverse the membrane as a helical segment. Residues 244 to 254 (YQASPANFINN) lie on the Extracellular side of the membrane. Residues 255–273 (FINVLSIIGIVVPIIYFVM) traverse the membrane as a helical segment. The Cytoplasmic portion of the chain corresponds to 274–293 (MFTSKKVESDERRKLTAYIP). The helical transmembrane segment at 294–312 (LFLSAIVFWAIEEQSSTII) threads the bilayer. Topologically, residues 313-335 (AVWGESRSNLNPTWFGFTFHIDP) are extracellular. The helical transmembrane segment at 336 to 354 (SWYQLLNPLFIVLLSPIFV) threads the bilayer. Residues 355 to 372 (RIWNKLGDRQPSTIVKFG) lie on the Cytoplasmic side of the membrane. The chain crosses the membrane as a helical span at residues 373 to 391 (LGLMLTGASYLIMTLPGLL). At 392–425 (NGTSGRASALWLVLMFAVQMAGELLVSPVGLSVS) the chain is on the extracellular side. Residues 426–444 (TKLAPVAFQSQMMAMWFLA) traverse the membrane as a helical segment. At 445-497 (DSTSQAINAQITPIFKAATEVHFFAITGIIGIIVGIILLIIKKPILKLMGDVR) the chain is on the cytoplasmic side.

It belongs to the major facilitator superfamily. Proton-dependent oligopeptide transporter (POT/PTR) (TC 2.A.17) family.

It localises to the cell membrane. Functionally, proton-dependent uptake of di- or tri-peptides. This Lactococcus lactis subsp. cremoris (Streptococcus cremoris) protein is Di-/tripeptide transporter (dtpT).